The following is a 75-amino-acid chain: UPF0235 protein Ava_3894 (75 aa).

Residues 1-32 form a disordered region; that stretch reads MQKKVKVKPNSKQQKIAEQDDGSLTVHLKSPP.

It belongs to the UPF0235 family.

In Trichormus variabilis (strain ATCC 29413 / PCC 7937) (Anabaena variabilis), this protein is UPF0235 protein Ava_3894.